The primary structure comprises 243 residues: MTLIAAHHLAVRRGRDEILSDVSLSVAPREIVTIVGPNGSGKSTLLRALLGILPAAAGRVSRRPGLRIGYVPQRLQVDGTLPLTAARFLSLPRRRAPAEVAAALERVGVPEVADRQLADLSGGQFQRVLLARALLTEPELLMLDEPTQGLDQPGEAAFYRLIEEVRSTTGAAILMVSHDLHVVMAASDRVICLNRHVCCEGTPRVVSNAPEYRALFGHGTQGALALYRHEHDHDHTHDHSHHA.

The ABC transporter domain maps to 4–219 (IAAHHLAVRR…PEYRALFGHG (216 aa)). 36 to 43 (GPNGSGKS) is an ATP binding site.

Belongs to the ABC transporter superfamily. Zinc importer (TC 3.A.1.15.5) family. The complex is composed of two ATP-binding proteins (ZnuC), two transmembrane proteins (ZnuB) and a solute-binding protein (ZnuA).

The protein resides in the cell inner membrane. It catalyses the reaction Zn(2+)(out) + ATP(in) + H2O(in) = Zn(2+)(in) + ADP(in) + phosphate(in) + H(+)(in). Its function is as follows. Part of the ABC transporter complex ZnuABC involved in zinc import. Responsible for energy coupling to the transport system. In Cereibacter sphaeroides (strain ATCC 17023 / DSM 158 / JCM 6121 / CCUG 31486 / LMG 2827 / NBRC 12203 / NCIMB 8253 / ATH 2.4.1.) (Rhodobacter sphaeroides), this protein is Zinc import ATP-binding protein ZnuC.